The primary structure comprises 177 residues: Large ribosomal subunit protein uL6 (177 aa).

Belongs to the universal ribosomal protein uL6 family. In terms of assembly, part of the 50S ribosomal subunit.

Functionally, this protein binds to the 23S rRNA, and is important in its secondary structure. It is located near the subunit interface in the base of the L7/L12 stalk, and near the tRNA binding site of the peptidyltransferase center. This chain is Large ribosomal subunit protein uL6, found in Acinetobacter baumannii (strain AB307-0294).